The primary structure comprises 828 residues: Glycerol-3-phosphate acyltransferase (828 aa).

An HXXXXD motif motif is present at residues 309 to 314 (CHRSHI).

Belongs to the GPAT/DAPAT family.

It localises to the cell inner membrane. The catalysed reaction is sn-glycerol 3-phosphate + an acyl-CoA = a 1-acyl-sn-glycero-3-phosphate + CoA. It participates in phospholipid metabolism; CDP-diacylglycerol biosynthesis; CDP-diacylglycerol from sn-glycerol 3-phosphate: step 1/3. This chain is Glycerol-3-phosphate acyltransferase, found in Pseudomonas putida (strain GB-1).